Reading from the N-terminus, the 476-residue chain is UDP-N-acetylmuramoylalanine--D-glutamate ligase (476 aa).

122–128 (GSNAKST) provides a ligand contact to ATP.

This sequence belongs to the MurCDEF family.

Its subcellular location is the cytoplasm. The catalysed reaction is UDP-N-acetyl-alpha-D-muramoyl-L-alanine + D-glutamate + ATP = UDP-N-acetyl-alpha-D-muramoyl-L-alanyl-D-glutamate + ADP + phosphate + H(+). The protein operates within cell wall biogenesis; peptidoglycan biosynthesis. In terms of biological role, cell wall formation. Catalyzes the addition of glutamate to the nucleotide precursor UDP-N-acetylmuramoyl-L-alanine (UMA). This Psychrobacter arcticus (strain DSM 17307 / VKM B-2377 / 273-4) protein is UDP-N-acetylmuramoylalanine--D-glutamate ligase.